The following is a 211-amino-acid chain: Glutathione S-transferase class-mu 28 kDa isozyme (211 aa).

In terms of domain architecture, GST N-terminal spans 4–86; the sequence is DHIKVIYFNG…YMAKKHHMMG (83 aa). Positions 10, 16, 41, 45, 53, 70, 71, and 104 each coordinate glutathione. In terms of domain architecture, GST C-terminal spans 88–211; sequence TEEEYYNVEK…YLSDRAATPF (124 aa).

Belongs to the GST superfamily. Mu family. Homodimer.

The catalysed reaction is RX + glutathione = an S-substituted glutathione + a halide anion + H(+). Functionally, conjugation of reduced glutathione to a wide number of exogenous and endogenous hydrophobic electrophiles. GST isoenzymes appear to play a central role in the parasite detoxification system. Other functions are also suspected including a role in increasing the solubility of haematin in the parasite gut. The chain is Glutathione S-transferase class-mu 28 kDa isozyme from Schistosoma haematobium (Blood fluke).